The chain runs to 157 residues: 2-C-methyl-D-erythritol 2,4-cyclodiphosphate synthase (157 aa).

A divalent metal cation-binding residues include D8 and H10. 4-CDP-2-C-methyl-D-erythritol 2-phosphate contacts are provided by residues 8–10 and 34–35; these read DIH and HS. A divalent metal cation is bound at residue H42. 4-CDP-2-C-methyl-D-erythritol 2-phosphate is bound by residues 56 to 58, 61 to 65, 132 to 135, and R142; these read DIG, FPDTD, and TTNE.

Belongs to the IspF family. Homotrimer. A divalent metal cation serves as cofactor.

The enzyme catalyses 4-CDP-2-C-methyl-D-erythritol 2-phosphate = 2-C-methyl-D-erythritol 2,4-cyclic diphosphate + CMP. Its pathway is isoprenoid biosynthesis; isopentenyl diphosphate biosynthesis via DXP pathway; isopentenyl diphosphate from 1-deoxy-D-xylulose 5-phosphate: step 4/6. In terms of biological role, involved in the biosynthesis of isopentenyl diphosphate (IPP) and dimethylallyl diphosphate (DMAPP), two major building blocks of isoprenoid compounds. Catalyzes the conversion of 4-diphosphocytidyl-2-C-methyl-D-erythritol 2-phosphate (CDP-ME2P) to 2-C-methyl-D-erythritol 2,4-cyclodiphosphate (ME-CPP) with a corresponding release of cytidine 5-monophosphate (CMP). This chain is 2-C-methyl-D-erythritol 2,4-cyclodiphosphate synthase, found in Chloroherpeton thalassium (strain ATCC 35110 / GB-78).